Here is a 1311-residue protein sequence, read N- to C-terminus: AF4/FMR2 family member 2 (1311 aa).

3 disordered regions span residues 94 to 187 (LVGI…LTQD), 204 to 229 (PQIG…GEDA), and 377 to 417 (TAGH…TKSV). Over residues 101-111 (SVPQNPNNKNE) the composition is skewed to polar residues. A compositionally biased stretch (basic and acidic residues) spans 155 to 164 (SKPEWSRDSH). Residues 165–187 (NPSTVLASQASGQPNKMQTLTQD) show a composition bias toward polar residues. 2 stretches are compositionally biased toward polar residues: residues 377-396 (TAGH…SQHL) and 403-417 (QKWN…TKSV). The residue at position 430 (Ser-430) is a Phosphoserine. 4 disordered regions span residues 457-530 (KAKP…KWQL), 574-726 (TNAS…DQEE), 818-867 (SLHA…IPEK), and 881-943 (PPCI…DKNI). Pro residues predominate over residues 465–477 (VNPPLATPQPPPA). Positions 478–491 (VQASGGSGSSSESE) are enriched in low complexity. Residue Thr-517 is modified to Phosphothreonine. The span at 582–597 (EPKERPLLSLIREKAR) shows a compositional bias: basic and acidic residues. Residues 615–625 (STTSETVSQRT) are compositionally biased toward polar residues. Basic and acidic residues predominate over residues 655–668 (PKEKESVELHDPPR). The span at 669-679 (GRNKATAHKPA) shows a compositional bias: basic residues. Residues 857-867 (PIEVAEKIPEK) show a composition bias toward basic and acidic residues. Pro residues-rich tracts occupy residues 883 to 892 (CISPAPPHKP) and 913 to 922 (FPPPLSPLPE).

This sequence belongs to the AF4 family. In terms of tissue distribution, brain (most abundant in hippocampus and amygdala), placenta and lung.

It localises to the nucleus speckle. Its function is as follows. RNA-binding protein. Might be involved in alternative splicing regulation through an interaction with G-quartet RNA structure. The polypeptide is AF4/FMR2 family member 2 (Homo sapiens (Human)).